The following is a 324-amino-acid chain: Elongation factor P--(R)-beta-lysine ligase (324 aa).

75 to 77 (SPE) lines the substrate pocket. Residues 99-101 (RNE) and N108 each bind ATP. Position 117 (Y117) interacts with substrate. 243–244 (EL) lines the ATP pocket. Residue E250 participates in substrate binding. G299 lines the ATP pocket.

It belongs to the class-II aminoacyl-tRNA synthetase family. EpmA subfamily. Homodimer.

It carries out the reaction D-beta-lysine + L-lysyl-[protein] + ATP = N(6)-((3R)-3,6-diaminohexanoyl)-L-lysyl-[protein] + AMP + diphosphate + H(+). With EpmB is involved in the beta-lysylation step of the post-translational modification of translation elongation factor P (EF-P). Catalyzes the ATP-dependent activation of (R)-beta-lysine produced by EpmB, forming a lysyl-adenylate, from which the beta-lysyl moiety is then transferred to the epsilon-amino group of a conserved specific lysine residue in EF-P. The chain is Elongation factor P--(R)-beta-lysine ligase from Pseudoalteromonas translucida (strain TAC 125).